Reading from the N-terminus, the 128-residue chain is Hemoglobin subunit beta-1 (128 aa).

Residues H2 to H128 enclose the Globin domain. The heme b site is built by H51 and H74.

Belongs to the globin family. In terms of assembly, hb 1 is a heterotetramer of two alpha and two beta-1 chains. As to expression, red blood cells (at protein level).

In terms of biological role, involved in oxygen transport from gills to the various peripheral tissues. This Somniosus microcephalus (Greenland sleeper shark) protein is Hemoglobin subunit beta-1.